The sequence spans 31 residues: Photosystem II reaction center protein M (31 aa).

Residues 5-25 (ILAFIATALLILVPTAFLLII) form a helical membrane-spanning segment.

The protein belongs to the PsbM family. In terms of assembly, PSII is composed of 1 copy each of membrane proteins PsbA, PsbB, PsbC, PsbD, PsbE, PsbF, PsbH, PsbI, PsbJ, PsbK, PsbL, PsbM, PsbT, PsbX, PsbY, PsbZ, Psb30/Ycf12, at least 3 peripheral proteins of the oxygen-evolving complex and a large number of cofactors. It forms dimeric complexes.

Its subcellular location is the plastid membrane. One of the components of the core complex of photosystem II (PSII). PSII is a light-driven water:plastoquinone oxidoreductase that uses light energy to abstract electrons from H(2)O, generating O(2) and a proton gradient subsequently used for ATP formation. It consists of a core antenna complex that captures photons, and an electron transfer chain that converts photonic excitation into a charge separation. This subunit is found at the monomer-monomer interface. The polypeptide is Photosystem II reaction center protein M (Cuscuta exaltata (Tall dodder)).